Here is a 199-residue protein sequence, read N- to C-terminus: FMN-dependent NADH:quinone oxidoreductase 2 (199 aa).

Residues serine 10, 16 to 18 (SVS), and 96 to 99 (MYNF) contribute to the FMN site.

Belongs to the azoreductase type 1 family. In terms of assembly, homodimer. The cofactor is FMN.

It catalyses the reaction 2 a quinone + NADH + H(+) = 2 a 1,4-benzosemiquinone + NAD(+). The enzyme catalyses N,N-dimethyl-1,4-phenylenediamine + anthranilate + 2 NAD(+) = 2-(4-dimethylaminophenyl)diazenylbenzoate + 2 NADH + 2 H(+). In terms of biological role, quinone reductase that provides resistance to thiol-specific stress caused by electrophilic quinones. Its function is as follows. Also exhibits azoreductase activity. Catalyzes the reductive cleavage of the azo bond in aromatic azo compounds to the corresponding amines. The polypeptide is FMN-dependent NADH:quinone oxidoreductase 2 (Pseudomonas putida (strain ATCC 47054 / DSM 6125 / CFBP 8728 / NCIMB 11950 / KT2440)).